A 2340-amino-acid chain; its full sequence is Protein pad-1 (2340 aa).

Disordered stretches follow at residues 411–458 and 1910–1959; these read KLIK…EPSI and TRNS…RRDP. The segment covering 415–432 has biased composition (basic and acidic residues); the sequence is KRPDSKPPRKPGDREGLH. Polar residues predominate over residues 437–448; the sequence is SLHSGVSGNSED. The segment covering 1922-1934 has biased composition (low complexity); the sequence is GGSITSGSTSTTT.

This sequence belongs to the DOP1 family.

Its function is as follows. Essential for cell patterning during gastrulation. May be involved in protein traffic between late Golgi and early endosomes. This is Protein pad-1 (pad-1) from Caenorhabditis briggsae.